The sequence spans 549 residues: Glucose-6-phosphate isomerase (549 aa).

E353 (proton donor) is an active-site residue. Residues H384 and K513 contribute to the active site.

This sequence belongs to the GPI family.

Its subcellular location is the cytoplasm. The catalysed reaction is alpha-D-glucose 6-phosphate = beta-D-fructose 6-phosphate. The protein operates within carbohydrate biosynthesis; gluconeogenesis. It functions in the pathway carbohydrate degradation; glycolysis; D-glyceraldehyde 3-phosphate and glycerone phosphate from D-glucose: step 2/4. Its function is as follows. Catalyzes the reversible isomerization of glucose-6-phosphate to fructose-6-phosphate. This is Glucose-6-phosphate isomerase from Brucella canis (strain ATCC 23365 / NCTC 10854 / RM-666).